The following is a 227-amino-acid chain: Cytochrome c oxidase subunit 2 (227 aa).

The Mitochondrial intermembrane portion of the chain corresponds to 1-14 (MAYPFQLGLQDATS). The helical transmembrane segment at 15 to 45 (PIMEELTNFHDHTLMIVFLISSLVLYIISLM) threads the bilayer. The Mitochondrial matrix portion of the chain corresponds to 46 to 59 (LTTKLTHTSTMDAQ). A helical membrane pass occupies residues 60–87 (EVETIWTILPAVILILIALPSLRILYMM). Residues 88–227 (DEINNPVLTV…HFENWSTSMI (140 aa)) lie on the Mitochondrial intermembrane side of the membrane. Cu cation-binding residues include His161, Cys196, Glu198, Cys200, His204, and Met207. Residue Glu198 coordinates Mg(2+).

The protein belongs to the cytochrome c oxidase subunit 2 family. In terms of assembly, component of the cytochrome c oxidase (complex IV, CIV), a multisubunit enzyme composed of 14 subunits. The complex is composed of a catalytic core of 3 subunits MT-CO1, MT-CO2 and MT-CO3, encoded in the mitochondrial DNA, and 11 supernumerary subunits COX4I, COX5A, COX5B, COX6A, COX6B, COX6C, COX7A, COX7B, COX7C, COX8 and NDUFA4, which are encoded in the nuclear genome. The complex exists as a monomer or a dimer and forms supercomplexes (SCs) in the inner mitochondrial membrane with NADH-ubiquinone oxidoreductase (complex I, CI) and ubiquinol-cytochrome c oxidoreductase (cytochrome b-c1 complex, complex III, CIII), resulting in different assemblies (supercomplex SCI(1)III(2)IV(1) and megacomplex MCI(2)III(2)IV(2)). Found in a complex with TMEM177, COA6, COX18, COX20, SCO1 and SCO2. Interacts with TMEM177 in a COX20-dependent manner. Interacts with COX20. Interacts with COX16. It depends on Cu cation as a cofactor.

Its subcellular location is the mitochondrion inner membrane. It catalyses the reaction 4 Fe(II)-[cytochrome c] + O2 + 8 H(+)(in) = 4 Fe(III)-[cytochrome c] + 2 H2O + 4 H(+)(out). In terms of biological role, component of the cytochrome c oxidase, the last enzyme in the mitochondrial electron transport chain which drives oxidative phosphorylation. The respiratory chain contains 3 multisubunit complexes succinate dehydrogenase (complex II, CII), ubiquinol-cytochrome c oxidoreductase (cytochrome b-c1 complex, complex III, CIII) and cytochrome c oxidase (complex IV, CIV), that cooperate to transfer electrons derived from NADH and succinate to molecular oxygen, creating an electrochemical gradient over the inner membrane that drives transmembrane transport and the ATP synthase. Cytochrome c oxidase is the component of the respiratory chain that catalyzes the reduction of oxygen to water. Electrons originating from reduced cytochrome c in the intermembrane space (IMS) are transferred via the dinuclear copper A center (CU(A)) of subunit 2 and heme A of subunit 1 to the active site in subunit 1, a binuclear center (BNC) formed by heme A3 and copper B (CU(B)). The BNC reduces molecular oxygen to 2 water molecules using 4 electrons from cytochrome c in the IMS and 4 protons from the mitochondrial matrix. This Praomys taitae (Taita hill rat) protein is Cytochrome c oxidase subunit 2 (MT-CO2).